The chain runs to 138 residues: MIQQTLCLIKPDATQRNLIGKILSHLEEAGLTIKALKKVQLNQEQAEGFYAEHQGKEFFAPLVEFMISAPIVAVVLEGENAIAHYRELMGATNPEQRKAGTIRALYAISGRENSVHGSDSEQSAKREIAYFFTPNEIL.

ATP is bound by residues Lys-10, Phe-58, Arg-86, Thr-92, Arg-103, and Asn-113. His-116 (pros-phosphohistidine intermediate) is an active-site residue.

It belongs to the NDK family. Homotetramer. Mg(2+) serves as cofactor.

It localises to the cytoplasm. The catalysed reaction is a 2'-deoxyribonucleoside 5'-diphosphate + ATP = a 2'-deoxyribonucleoside 5'-triphosphate + ADP. It catalyses the reaction a ribonucleoside 5'-diphosphate + ATP = a ribonucleoside 5'-triphosphate + ADP. Major role in the synthesis of nucleoside triphosphates other than ATP. The ATP gamma phosphate is transferred to the NDP beta phosphate via a ping-pong mechanism, using a phosphorylated active-site intermediate. This is Nucleoside diphosphate kinase from Actinobacillus pleuropneumoniae serotype 5b (strain L20).